Reading from the N-terminus, the 589-residue chain is Protein NRT1/ PTR FAMILY 4.7 (589 aa).

12 helical membrane-spanning segments follow: residues 59–79 (GMLA…AFLA), 105–125 (AFMG…DAFF), 127–147 (TFHI…VLTV), 160–180 (VFLF…KGSL), 201–221 (FFFN…VTVV), 230–250 (WSYG…VFLA), 344–364 (IVIK…CLAQ), 383–403 (FTVP…ILAP), 429–449 (IGTG…VETK), 471–491 (LPIT…ADLF), 520–540 (LAMG…VTGL), and 560–580 (FYWL…FWAS).

This sequence belongs to the major facilitator superfamily. Proton-dependent oligopeptide transporter (POT/PTR) (TC 2.A.17) family. In terms of tissue distribution, expressed in flowers.

Its subcellular location is the membrane. The protein is Protein NRT1/ PTR FAMILY 4.7 (NPF4.7) of Arabidopsis thaliana (Mouse-ear cress).